Here is a 372-residue protein sequence, read N- to C-terminus: Small ribosomal subunit protein mS77 (rPPR2) (372 aa).

The N-terminal 28 residues, 1-28 (MKSFLLSRQAIHRISLLSSKTPTFCRNF), are a transit peptide targeting the mitochondrion. Residues 240 to 265 (DNSIRESETVDGEVEEEGFVPSDEVE) are disordered. A compositionally biased stretch (acidic residues) spans 248-257 (TVDGEVEEEG).

As to quaternary structure, component of the mitochondrial ribosome small subunit.

The protein resides in the mitochondrion. Functionally, required for karyogamy during female gametophyte development, when the two polar nuclei fuse to form the diploid central cell nucleus. The sequence is that of Small ribosomal subunit protein mS77 (rPPR2) from Arabidopsis thaliana (Mouse-ear cress).